The sequence spans 607 residues: Coronin-like protein cor-1 (607 aa).

WD repeat units follow at residues A77 to N117, G127 to E167, and G170 to E209. The disordered stretch occupies residues P415–V564. Positions Q424 to P436 are enriched in low complexity. Residues S437 to R447 show a composition bias toward pro residues. Basic and acidic residues-rich tracts occupy residues S473 to K489 and A517 to D533. Low complexity predominate over residues S544–S559. A coiled-coil region spans residues H563 to S602.

Belongs to the WD repeat coronin family.

The protein resides in the cytoplasm. Its subcellular location is the cytoskeleton. Functionally, required to direct the migration of Q neuroblasts along the anterior axis of the body during larval development. This is dependent on its asymmetric expression in Q neuroblasts. The protein is Coronin-like protein cor-1 (cor-1) of Caenorhabditis elegans.